A 243-amino-acid chain; its full sequence is Beta-glucanase (243 aa).

Positions 1–27 (MSYRVKRMLMLLVTGLFLSLSTFAASA) are cleaved as a signal peptide. One can recognise a GH16 domain in the interval 29–243 (AQTGGSFYEP…SLHWVRYTKR (215 aa)). Cysteine 61 and cysteine 90 are oxidised to a cystine. Residue glutamate 134 is the Nucleophile of the active site. Residue glutamate 138 is the Proton donor of the active site.

It belongs to the glycosyl hydrolase 16 family.

The catalysed reaction is Hydrolysis of (1-&gt;4)-beta-D-glucosidic linkages in beta-D-glucans containing (1-&gt;3)- and (1-&gt;4)-bonds.. The chain is Beta-glucanase (bg1) from Bacillus licheniformis.